Reading from the N-terminus, the 611-residue chain is Translation initiation factor RLI1 (611 aa).

4Fe-4S ferredoxin-type domains follow at residues 7-31 (RVAI…SCPV) and 46-75 (RIAF…IINL). 2 ABC transporter domains span residues 77-318 (TNLE…FLDG) and 345-565 (AEKS…LKNL). ATP contacts are provided by residues 110–117 (GTNGIGKS) and 382–389 (GENGTGKT).

The protein belongs to the ABC transporter superfamily. ABCE family. In terms of assembly, component of the multifactor complex (MFC). The complex associates with pre-initiation complexes.

It localises to the cytoplasm. The protein resides in the nucleus. Functionally, component of the multifactor complex (MFC) involved in translation initiation. Required for the binding of MFC to the 40S ribosome. Required for the processing and nuclear export of the 60S and 40S ribosomal subunits. This is Translation initiation factor RLI1 (RLI1) from Chaetomium thermophilum (strain DSM 1495 / CBS 144.50 / IMI 039719) (Thermochaetoides thermophila).